We begin with the raw amino-acid sequence, 510 residues long: Zinc metalloproteinase (510 aa).

The N-terminal stretch at 1–24 (MKSKLICIIMVIAFQAHFTMTVKA) is a signal peptide. The propeptide occupies 25-200 (DSVGEEKLQN…ILKKQNMLSE (176 aa)). H349 is a Zn(2+) binding site. The active site involves E350. H353 and E373 together coordinate Zn(2+). H437 acts as the Proton donor in catalysis.

Belongs to the peptidase M4 family. The cofactor is Zn(2+).

The protein resides in the secreted. In terms of biological role, probably linked to the pathogenesis of listerial infection. The sequence is that of Zinc metalloproteinase (mpl) from Listeria monocytogenes serovar 1/2a (strain ATCC BAA-679 / EGD-e).